The following is a 245-amino-acid chain: PF03932 family protein CutC (245 aa).

It belongs to the CutC family.

It is found in the cytoplasm. This chain is PF03932 family protein CutC, found in Rhizobium meliloti (strain 1021) (Ensifer meliloti).